Consider the following 540-residue polypeptide: Hexose transporter HXT14 (540 aa).

Residues 1-56 (MTAQIPYQHSSGYISHFHNNELDAGRGRDYNVTIKYLDDKEENIEGQAAKISHNAS) are Cytoplasmic-facing. The helical transmembrane segment at 57–76 (LHIPVLLCLVISLGGFIFGW) threads the bilayer. At 77–119 (DIGTIGGMTNMVSFQEKFGTTNIIHDDETIFVSTKKLTDLQIG) the chain is on the extracellular side. Residues 120-140 (LIISIFNISCGVGALTLSKIG) traverse the membrane as a helical segment. Topologically, residues 141-146 (DWIGRK) are cytoplasmic. Residues 147–167 (GGIWFALVVYCIGITIQILSY) form a helical membrane-spanning segment. At 168-177 (GRWYFLTLGR) the chain is on the extracellular side. The helical transmembrane segment at 178–198 (AVTGIGVGVTTVLVPMFLSEN) threads the bilayer. Residues 199-204 (SPLKIR) lie on the Cytoplasmic side of the membrane. The helical transmembrane segment at 205 to 225 (GSMVSTYQLIVTFGILMGNIL) threads the bilayer. At 226–243 (NFICERCYKDPTQNIAWQ) the chain is on the extracellular side. Residues 244–264 (LPLFLGYIWAIIIGMSLVYVP) traverse the membrane as a helical segment. Topologically, residues 265–357 (ESPQYLAKIK…IMAFQQLSGI (93 aa)) are cytoplasmic. Residues 358 to 374 (NYFFYYGTSVFKGVGIK) form a helical membrane-spanning segment. The Extracellular portion of the chain corresponds to 375-380 (DPYITS). A helical membrane pass occupies residues 381–398 (IILSSVNFLSTILGIYYV). At 399–405 (EKWGHKT) the chain is on the cytoplasmic side. Residues 406-426 (CLLYGSTNLLFYMMTYATVGT) form a helical membrane-spanning segment. Over 427 to 440 (FGRETDFSNIVLII) the chain is Extracellular. The helical transmembrane segment at 441-461 (VTCCFIFWFAITLGPVTFVLV) threads the bilayer. At 462-478 (SELFPLRTRAISMAICT) the chain is on the cytoplasmic side. Residues 479 to 499 (FINWMFNFLISLLTPMIVSKI) form a helical membrane-spanning segment. Asp-500 is a topological domain (extracellular). The chain crosses the membrane as a helical span at residues 501–521 (FKLGYIFAACLLALIIFSWIL). Over 522 to 540 (VPETRKKNEQEINKIFEPE) the chain is Cytoplasmic.

Belongs to the major facilitator superfamily. Sugar transporter (TC 2.A.1.1) family.

Its subcellular location is the membrane. Probable glucose transporter. The sequence is that of Hexose transporter HXT14 (HXT14) from Saccharomyces cerevisiae (strain ATCC 204508 / S288c) (Baker's yeast).